The primary structure comprises 241 residues: RecQ-mediated genome instability protein 1 (241 aa).

It belongs to the RMI1 family. In terms of assembly, forms a complex with SGS1 and TOP3.

The protein resides in the cytoplasm. It localises to the nucleus. Structure-specific DNA-binding protein with a preference for cruciform structures. Also binds single-stranded DNA (ssDNA). Functions together with SGS1 and TOP3 to maintain genome integrity. Essential for proper meiotic cell division. Required for normal S-phase progression and DNA damage response. Required for resistance to the DNA-damaging agent methyl methanesulfonate (MMS). The polypeptide is RecQ-mediated genome instability protein 1 (Saccharomyces cerevisiae (strain ATCC 204508 / S288c) (Baker's yeast)).